A 379-amino-acid polypeptide reads, in one-letter code: Probable pectin lyase A (379 aa).

A signal peptide spans 1–19 (MKFALLSGVAAGLLPVVSA). 2 disulfides stabilise this stretch: cysteine 82–cysteine 101 and cysteine 91–cysteine 225. Arginine 255 is a catalytic residue. A disulfide bond links cysteine 322 and cysteine 330.

Belongs to the polysaccharide lyase 1 family.

The protein localises to the secreted. It carries out the reaction Eliminative cleavage of (1-&gt;4)-alpha-D-galacturonan methyl ester to give oligosaccharides with 4-deoxy-6-O-methyl-alpha-D-galact-4-enuronosyl groups at their non-reducing ends.. Its function is as follows. Pectinolytic enzymes consist of four classes of enzymes: pectin lyase, polygalacturonase, pectin methylesterase and rhamnogalacturonase. Among pectinolytic enzymes, pectin lyase is the most important in depolymerization of pectin, since it cleaves internal glycosidic bonds of highly methylated pectins. The chain is Probable pectin lyase A (pelA) from Aspergillus oryzae (strain ATCC 42149 / RIB 40) (Yellow koji mold).